Here is a 218-residue protein sequence, read N- to C-terminus: Small ribosomal subunit protein uS3c (218 aa).

The KH type-2 domain occupies 47–118 (VQKNIRISSG…KLNIAITRIT (72 aa)).

It belongs to the universal ribosomal protein uS3 family. As to quaternary structure, part of the 30S ribosomal subunit.

The protein localises to the plastid. It is found in the chloroplast. This Vitis vinifera (Grape) protein is Small ribosomal subunit protein uS3c (rps3).